The sequence spans 322 residues: Cysteine synthase (322 aa).

2 residues coordinate hydrogen sulfide: Asn8 and Arg35. N6-(pyridoxal phosphate)lysine is present on Lys42. Pyridoxal 5'-phosphate is bound by residues Asn72 and 177-181 (GTGGT). Leu269 provides a ligand contact to hydrogen sulfide. Position 273 (Ser273) interacts with pyridoxal 5'-phosphate.

This sequence belongs to the cysteine synthase/cystathionine beta-synthase family. As to quaternary structure, homodimer. The cofactor is pyridoxal 5'-phosphate.

The enzyme catalyses O-acetyl-L-serine + hydrogen sulfide = L-cysteine + acetate. The protein operates within amino-acid biosynthesis; L-cysteine biosynthesis; L-cysteine from L-serine: step 2/2. This chain is Cysteine synthase (cysK), found in Buchnera aphidicola subsp. Schizaphis graminum (strain Sg).